The chain runs to 362 residues: Zinc phosphodiesterase ELAC protein 1 (362 aa).

Residues histidine 62, histidine 64, aspartate 66, histidine 67, histidine 181, aspartate 252, and histidine 312 each contribute to the Zn(2+) site. Residue aspartate 66 is the Proton acceptor of the active site.

It belongs to the RNase Z family. As to quaternary structure, homodimer. Zn(2+) is required as a cofactor.

The protein localises to the cytoplasm. The protein resides in the cytosol. It localises to the nucleus. It catalyses the reaction Endonucleolytic cleavage of RNA, removing extra 3' nucleotides from tRNA precursor, generating 3' termini of tRNAs. A 3'-hydroxy group is left at the tRNA terminus and a 5'-phosphoryl group is left at the trailer molecule.. Zinc phosphodiesterase, which displays some tRNA 3'-processing endonuclease activity. Specifically involved in tRNA repair: acts downstream of the ribosome-associated quality control (RQC) pathway by removing a 2',3'-cyclic phosphate from tRNAs following cleavage by ANKZF1. tRNAs are then processed by TRNT1. This chain is Zinc phosphodiesterase ELAC protein 1 (Elac1), found in Mus musculus (Mouse).